The sequence spans 342 residues: Ribosomal RNA small subunit methyltransferase C (342 aa).

It belongs to the methyltransferase superfamily. RsmC family. As to quaternary structure, monomer.

The protein localises to the cytoplasm. The catalysed reaction is guanosine(1207) in 16S rRNA + S-adenosyl-L-methionine = N(2)-methylguanosine(1207) in 16S rRNA + S-adenosyl-L-homocysteine + H(+). Its function is as follows. Specifically methylates the guanine in position 1207 of 16S rRNA in the 30S particle. This is Ribosomal RNA small subunit methyltransferase C from Enterobacter sp. (strain 638).